A 137-amino-acid polypeptide reads, in one-letter code: Large ribosomal subunit protein uL16 (137 aa).

Belongs to the universal ribosomal protein uL16 family. In terms of assembly, part of the 50S ribosomal subunit.

Its function is as follows. Binds 23S rRNA and is also seen to make contacts with the A and possibly P site tRNAs. The polypeptide is Large ribosomal subunit protein uL16 (Streptococcus thermophilus (strain ATCC BAA-491 / LMD-9)).